The chain runs to 150 residues: Transcription antitermination protein NusB (150 aa).

It belongs to the NusB family.

Functionally, involved in transcription antitermination. Required for transcription of ribosomal RNA (rRNA) genes. Binds specifically to the boxA antiterminator sequence of the ribosomal RNA (rrn) operons. The protein is Transcription antitermination protein NusB of Streptococcus pyogenes serotype M6 (strain ATCC BAA-946 / MGAS10394).